Reading from the N-terminus, the 138-residue chain is Cellular retinoic acid-binding protein 2 (138 aa).

Positions 21–31 (KVLGVNVMLRK) match the Nuclear localization signal motif. K102 participates in a covalent cross-link: Glycyl lysine isopeptide (Lys-Gly) (interchain with G-Cter in SUMO). Residue 133 to 135 (RVY) participates in all-trans-retinoate binding.

This sequence belongs to the calycin superfamily. Fatty-acid binding protein (FABP) family. Interacts with RXR and RARA. Interacts with importin alpha. Post-translationally, sumoylated in response to retinoic acid binding, sumoylation is critical for dissociation from ER and subsequent nuclear translocation.

Its subcellular location is the cytoplasm. It is found in the endoplasmic reticulum. The protein localises to the nucleus. In terms of biological role, transports retinoic acid to the nucleus. Regulates the access of retinoic acid to the nuclear retinoic acid receptors. This is Cellular retinoic acid-binding protein 2 (CRABP2) from Homo sapiens (Human).